A 798-amino-acid polypeptide reads, in one-letter code: MGRRNRRNRQRHQRSTEQRSPAEEEQRRKAREQAAWECGYPEIIKENKLFEHYYQELKIVPDGEWDKFMASLREPLPATIRITGYKSHAKEILHCLKEKYFKELQDIEVDGQKIEAPQPLSWYPEELAWHTNLSRKIIRKSPELEKFHQFLVNETESGNISRQEAVSMIPPVLLKVQPHHKILDMCAAPGSKTAQIIEMLHADMNVPFPEGFVIANDVDNKRCYLLVHQAKRLNSPCIMVVNHDASSIPRLLVENNGSREVLYYDRILCDVPCSGDGTLRKNIDVWKKWTTLNSLQLHGLQIRIATRGVEQLAEGGRMVYSTCSLNPVEDEAVIASLLDKSEGSLELADVASEIPGLKWMPGITQWKVMTKEGHWYEKWEDIPTSRHTQIRPTMFPPKDEEKLKSMNLNRCMRILPHHQNTGGFFVAVLIKKAPMPWNKRQPKLQRRPPVSACDASIAVAPELVKAVTENSAGMADEPAVDTENGETKPCTNQSDSSKTDIVCCPPPSKKMKLFGFKEDPFVFVSEDDPIFDPIQTFYALDPSFPKKNLLTRTQEGKKRQLYMVSKELRNVLLHNSEKMKVINTGIKVLCRNNDGEQYGCAYRLAQEGIYTLYPFINARIVTVSIEDIKVLLTQENPFLSKFSKETQKQANNFDMGSIVLKYEPDPQEPETLQCPIVLCGWRGKTSIRSFVPKNERLHYLRMMGVEVFKEKAEVLEKKPVEGKACDEEHIDEKMDIDGAKEESKELSGNESGDDEDPKEEDVIDRGVLEHVALKNTSAIPASVEDQAEDASVSKESVD.

Residues Met1–Gln13 are compositionally biased toward basic residues. The disordered stretch occupies residues Met1–Ala30. Basic and acidic residues predominate over residues Arg14–Ala30. S-adenosyl-L-methionine is bound by residues Cys186–Lys192, Asp217, Asp244, and Asp270. Catalysis depends on Cys323, which acts as the Nucleophile. Disordered regions lie at residues Asp476 to Thr499 and Lys723 to Asp798. Positions Lys723–Ser747 are enriched in basic and acidic residues. Over residues Ser751 to Val762 the composition is skewed to acidic residues. A compositionally biased stretch (basic and acidic residues) spans Ile763 to Ala772.

Belongs to the class I-like SAM-binding methyltransferase superfamily. RsmB/NOP family. TRM4 subfamily.

Its subcellular location is the nucleus. The protein resides in the nucleolus. It is found in the cytoplasm. The protein localises to the mitochondrion. It localises to the cytoskeleton. Its subcellular location is the spindle. The protein resides in the secreted. It is found in the extracellular exosome. The catalysed reaction is cytidine(48) in tRNA + S-adenosyl-L-methionine = 5-methylcytidine(48) in tRNA + S-adenosyl-L-homocysteine + H(+). It catalyses the reaction cytidine(49) in tRNA + S-adenosyl-L-methionine = 5-methylcytidine(49) in tRNA + S-adenosyl-L-homocysteine + H(+). The enzyme catalyses cytidine(50) in tRNA + S-adenosyl-L-methionine = 5-methylcytidine(50) in tRNA + S-adenosyl-L-homocysteine + H(+). It carries out the reaction cytidine(34) in tRNA precursor + S-adenosyl-L-methionine = 5-methylcytidine(34) in tRNA precursor + S-adenosyl-L-homocysteine + H(+). The catalysed reaction is a cytidine in mRNA + S-adenosyl-L-methionine = a 5-methylcytidine in mRNA + S-adenosyl-L-homocysteine + H(+). RNA cytosine C(5)-methyltransferase that methylates cytosine to 5-methylcytosine (m5C) in various RNAs, such as tRNAs, mRNAs and some long non-coding RNAs (lncRNAs). Involved in various processes, such as epidermal stem cell differentiation, testis differentiation and maternal to zygotic transition during early development: acts by increasing protein synthesis; cytosine C(5)-methylation promoting tRNA stability and preventing mRNA decay. Methylates cytosine to 5-methylcytosine (m5C) at positions 34 and 48 of intron-containing tRNA(Leu)(CAA) precursors, and at positions 48, 49 and 50 of tRNA(Gly)(GCC) precursors. tRNA methylation is required generation of RNA fragments derived from tRNAs (tRFs). Also mediates C(5)-methylation of mitochondrial tRNAs. Catalyzes cytosine C(5)-methylation of mRNAs, leading to stabilize them and prevent mRNA decay. Cytosine C(5)-methylation of mRNAs also regulates mRNA export. Also mediates cytosine C(5)-methylation of non-coding RNAs, such as vault RNAs (vtRNAs), promoting their processing into regulatory small RNAs. Required for proper spindle assembly and chromosome segregation, independently of its methyltransferase activity. This is RNA cytosine-C(5)-methyltransferase NSUN2 from Xenopus tropicalis (Western clawed frog).